Consider the following 239-residue polypeptide: Phosphoribosylaminoimidazole-succinocarboxamide synthase (239 aa).

This sequence belongs to the SAICAR synthetase family.

The enzyme catalyses 5-amino-1-(5-phospho-D-ribosyl)imidazole-4-carboxylate + L-aspartate + ATP = (2S)-2-[5-amino-1-(5-phospho-beta-D-ribosyl)imidazole-4-carboxamido]succinate + ADP + phosphate + 2 H(+). The protein operates within purine metabolism; IMP biosynthesis via de novo pathway; 5-amino-1-(5-phospho-D-ribosyl)imidazole-4-carboxamide from 5-amino-1-(5-phospho-D-ribosyl)imidazole-4-carboxylate: step 1/2. In Bacillus cereus (strain 03BB102), this protein is Phosphoribosylaminoimidazole-succinocarboxamide synthase.